The primary structure comprises 2690 residues: MVSRILRPVTGSTVLLFGPQALSFTKEDFDQIRTTVLETQGFSWIVDAVAGLPEHWKALAERIPKLQSILGEQLLENLKDWFTTGQVNEADFHLPNILLSPLVVITQLAQYCQYLELSQADDQSDAHAIQNDNIEALGFCTGLLSAVAVACSTNRRQFQEYGAVAIRLAMLVGAAADAEDALSDYGASKSMAIAWNAPEAGAELSRVLQDFPEAYVSVWYDANRATVTTAAKTVPALQQKLRSAGIIATEVGLRGRFHCDCYGNDIDSMIDFCDSHPAFQFPDASELVLQTRSNAGGDLITKGNLHQHALRLILLERSQWYQTFSTMHAARLQHKDSVLVSFGPERCIPPSLLRGLSAQVVNMADLAVRNMRVPGATSALKYAHAVDENDIAVIGMSCKVAGADDLEGFWDLLCRGESQHQEVPKERFTFDTIFRELDTKRKWFGNFIRDHDAFDHKFFKKSPREIASTDPQQRHMLQIAYQAVEQSGYFCNPSVDKQIGCYIGVCAADYENNIACHAPNAFSATGNLKSFIAGKISHYFGWTGPGLTIDTACSSSAVAVHQACKAILSGECTAALAGGTNVMTNPLWFQNLAGASFLSPTGQCKPFDAHADGYCRGEGIAAVFLKKLSTAIEDGDQILGTIASTAVYQNQNCTPIFVPNSPSLSELFKDVTREAHLVPKQITVVEAHGTGTPVGDPAEYESILRVLGGPNRSTPLHFGSVKGLIGHTECTSGVISLIKVLLMINEGYIPPQASFTTMNPSIKALPEHNMKIATKLTPWNEDFRAALINNYGASGSNASLIVTQAPSARDPATIQVLEGARYPFWFPGPDDRSLRSYASRFLRFIQSKTVSAKNFSPRNLAFNLSRQSNRTFGRAAIFNCASMGELEQKLTALGNGNSSVAPTVRPATRPVVLCFGGQISTFVGLDRQLYDNVVILRSYLDRCDAVCRALKAGSIYPAIFERNPISDPVKLQTSLFAIQYSCAKSWIDCGVQPVALVGHSFGELTAVCISGILGLEDALKMIIGRASLIRDSWGAEKGSMMAVEADLPVVEKLLGESEKLCKDDKPATIACFNGPRSFTLAGSSLAIDAVLQTVSGNSSFSSVRTKKLNVTNAFHSTLVEPLVVDLERTATGLKFGESIIHLERATESHSDEKLTPKYVASHMRDPVYFNHAVQRLAKQHPSCIWLEAGCNSTIINMLGRALGASADHHFQPVNLSSDHGLDSLSDTTVSLWRAGLNVSFWPHHSSQTYEYANLLLPPYQFEKARHWVELKPPPKLTAEPVTQPASPVEELPKGLLTFVGYQDKDQRTARFRINTMVPKYEELVSGHLIAQTAPICPATLEVDLAIEALYSLRPDLVKSTLQPQIHHVDNQAPICVNPERMVWLQLEAFDAERHSWNWKIESTGSQKASATTLHVTGKVFFRSVDDLQFQLDFARYERLVGYQRCLGILNCLDADDIIQGRNIYKTFAEIVDYGEMYRGLQKLVGQGNESAGRIVKKYSGETWLDTHLSDCFSQVGGIWVNCMTDRAPTDMYIANGFEQWLRSPKISCDYERPEIWDVYAYHHRSSDKAYLTDIFIFDSTNGLLTEVILGINYAKVPKMSMSKLLSRLTADGARQSHHAAPVSAPAKLAAPAAVPGPVSAVKVKKASKPKKKQFSAPDISGKVRAMLAELAGLEPEEIKDDTELANIGIDSLMGMELAREIEGIFKCSLPTDELVEVTNFQGLLRCIQEALGPSEGVEEETDNEEGEDGESSENPSVFTPSDAATSVSSAKADVAEFLAEFLGIEESDIAPATLLRDLGVDSLLSTELRSEIASKFDVHIDEEVVLEELSVGEFDVKVNGKSEGTPRSSAASTMPAKIIEGSVKVNASHPTVNSTLHTSSNGELSLPVSTVLEAFGETKALTDQFISDYHCANYMDTILPKQDQLCVALVIEAFEQLGCSLRNAKSGQTLERIKYLPQHERLVEYLYMMLEKGARLVDMDDDRITRTAVTVPSKSSSEICQELMRDYPGHNFANQLTQFCGTRLADVLTGKLDGIKLIFGSEEGRTLVSGLYGDSLLNKLAYKQMEDFLKRLISKLPMHEGPLKILEMGAGTGGTTKWIVPMLASLNVPIEYTFTDLAPSFVAAARKKFKQYPFMKFRVHDIEKAPADDLVGTQHIILASNAVHATHSLTVSTSHIHKALRQDGFLMMLEMTETVYWIDIIFGLLEGWWLFDDGRRHAISHQSRWERDLNTAGFGHVDWTDGHRSEVNIQRIFLALASGQRYERQPVTPSSAAKAPLTDFAARQAAVLKYVRNSTQGFVAPTTSSTSQPEPSPPGKCVLVTGATGSLGSHLVSHFAQLNDVTSVVCINRVSREDPTRRQQQSMESKGISLSHTALSKLIILETDTSKPMLGLPAEQYRHLVNNVTHVLHNAWPMSGKRPVKGFELQFQVMKNLITLAWDISCRRGPDFKVRFQLISSISVVGYYPLRTGNRHVPEERVCIEDLLPNGYSDAKYVCELMLDETLHQYPDRFSPMAVRLGQVAGSKTSGYWNPMEHLSFLVKSSQTLKALPDFEGELSWTPVNDVAGTLADLLLADNTPYPIYHIDNPVRQPWREMIPILADGLDIPKGNVIPFPEWVQRVRRFPGSVELDNPAAKLIDFLDDNFLRMSCGGLLLDTTKSREHSPTLADVGPVSAEVVRKYIQAWKEMGFLH.

The 116-residue stretch at 96–211 folds into the Starter acyltransferase (SAT) domain; that stretch reads NILLSPLVVI…AELSRVLQDF (116 aa). The active-site Nucleophile; for transacylase activity is Cys140. His258 functions as the Proton donor/acceptor; for transacylase activity in the catalytic mechanism. One can recognise a Ketosynthase family 3 (KS3) domain in the interval 388-804; the sequence is ENDIAVIGMS…GSNASLIVTQ (417 aa). Active-site for beta-ketoacyl synthase activity residues include Cys553, His688, and His727. In terms of domain architecture, Malonyl-CoA:ACP transacylase (MAT) spans 915–1182; sequence FGGQISTFVG…VQRLAKQHPS (268 aa). An N-terminal hotdog fold region spans residues 1296–1426; that stretch reads LTFVGYQDKD…GKVFFRSVDD (131 aa). A PKS/mFAS DH domain is found at 1296–1602; the sequence is LTFVGYQDKD…YAKVPKMSMS (307 aa). The tract at residues 1323-1600 is product template (PT) domain; that stretch reads LVSGHLIAQT…INYAKVPKMS (278 aa). The active-site Proton acceptor; for dehydratase activity is His1327. The interval 1454-1602 is C-terminal hotdog fold; the sequence is ADDIIQGRNI…YAKVPKMSMS (149 aa). The active-site Proton donor; for dehydratase activity is Asp1510. The 75-residue stretch at 1657–1731 folds into the Carrier 1 domain; that stretch reads PDISGKVRAM…GLLRCIQEAL (75 aa). Ser1691 carries the O-(pantetheine 4'-phosphoryl)serine modification. The interval 1731–1764 is disordered; that stretch reads LGPSEGVEEETDNEEGEDGESSENPSVFTPSDAA. Positions 1736–1751 are enriched in acidic residues; sequence GVEEETDNEEGEDGES. The segment covering 1755 to 1764 has biased composition (polar residues); it reads PSVFTPSDAA. The Carrier 2 domain maps to 1768–1842; it reads SSAKADVAEF…EFDVKVNGKS (75 aa). Residue Ser1802 is modified to O-(pantetheine 4'-phosphoryl)serine. Positions 1948–2255 are methyltransferase domain; sequence QTLERIKYLP…EVNIQRIFLA (308 aa). The Thioester reductase (TE) domain occupies 2320–2564; it reads VTGATGSLGS…LSWTPVNDVA (245 aa).

The cofactor is pantetheine 4'-phosphate.

It participates in secondary metabolite biosynthesis. Non-reducing polyketide synthase; part of the gene cluster that mediates the biosynthesis of azaphilone pigments (MonAzPs), a complex mixture of compounds with a common azaphilone skeleton very widely used as food colorants. PigA catalyzes the first step of MonAzPs biosynthesis and forms the hexaketide precursor from successive condensations of five malonyl-CoA units, with a simple acetyl-CoA starter unit. The starter acyl transferase (SAT) domain of pigA selects an acetyl-CoA starter unit, and the ketoacyl synthase (KS)-acyl transferase (AT)-acyl carrier protein (ACP) domains extend this starter unit five times with malonyl-CoA in five successive decarboxylative Claisen condensation cycles. The methyltransferase (MT) domain conducts a single C-methylation at C-4, most likely at the pentaketide stage. The reactive hexaketide chain then undergoes a product template (PT) domain-mediated C-2 to C-7 aldol cyclization to afford the first aromatic ring, followed by reductive release of the first pathway intermediate by the NADPH-dependent reductive release (R) domain. The role of esterase pigG is not clear, but it may play at most a supplementary role in the formation of the benzaldehyde produced by the pigA nrPKS. This very reactive benzaldehyde is intercepted by the pigC ketoreductase that to provide the first stable enzyme-free MonAzPs intermediate, 6-(4-hydroxy-2-oxopentyl)-3-methyl-2,4-dioxocyclohexane carbaldehyde, also known as M7PKS-1. The FAD-dependent monooxygenase pigN hydroxylates M7PKS-1 at C-4, which triggers the formation of the pyran ring. PigJ, pigK and pigD are involved in the acetylation of the pyran ring. PigJ and pigK form the two subunits of a dedicated fungal FAS that produces the side chain fatty acyl moiety of MonAzPs and pigD transfers the fatty acyl chain to the C-4 alcohol. PigM and pigO are involved in the elimination of the omega-1 alcohol. PigM acts as an O-acetyltransferase that synthesizes the putative O-11 acetyl intermediate whereas pigO eliminates acetic acid to yield an intermediate with a C10(11) double bond. The dehydration of the C-11 alcohol followed by the reduction of the C6(7) double bond by the NAD(P)H-dependent oxidoreductase pigE increases the electrophilicity of the C-5 ketone of the resulting acyl benzopyran. This in turn sets up the C-5 ketone for an intramolecular Knoevenagel aldol condensation with the C-20 enol of the side chain. This condensation affords the characteristic linear tricyclic carbon skeletons of the yellow pigments that serve as the common precursors for the classical yellow pigments monascin and ankaflavin, orange pigments rubopunctatin and monascorubrin, and red pigments ribropunctamine and monascorubramine. The FAD-dependent oxidoreductase pigF is especially invoved in the biosynthesis of orange and red pigments via desaturation of C6(7). The protein is Non-reducing polyketide synthase pigA of Monascus ruber (Mold).